The chain runs to 403 residues: Argininosuccinate synthase (403 aa).

ATP-binding positions include 12–20 (AYSGGLDTS) and A39. Residues Y90 and S95 each contribute to the L-citrulline site. G120 is a binding site for ATP. The L-aspartate site is built by T122, N126, and D127. N126 contacts L-citrulline. Residues R130, S182, S191, E267, and Y279 each coordinate L-citrulline.

The protein belongs to the argininosuccinate synthase family. Type 1 subfamily. In terms of assembly, homotetramer.

The protein resides in the cytoplasm. It carries out the reaction L-citrulline + L-aspartate + ATP = 2-(N(omega)-L-arginino)succinate + AMP + diphosphate + H(+). It functions in the pathway amino-acid biosynthesis; L-arginine biosynthesis; L-arginine from L-ornithine and carbamoyl phosphate: step 2/3. The sequence is that of Argininosuccinate synthase from Ruthia magnifica subsp. Calyptogena magnifica.